A 149-amino-acid chain; its full sequence is Large ribosomal subunit protein bL9 (149 aa).

The protein belongs to the bacterial ribosomal protein bL9 family.

Its function is as follows. Binds to the 23S rRNA. This is Large ribosomal subunit protein bL9 from Fusobacterium nucleatum subsp. nucleatum (strain ATCC 25586 / DSM 15643 / BCRC 10681 / CIP 101130 / JCM 8532 / KCTC 2640 / LMG 13131 / VPI 4355).